The following is a 354-amino-acid chain: Serine/threonine-protein kinase ppk34 (354 aa).

The 292-residue stretch at 40 to 331 folds into the Protein kinase domain; the sequence is YRLKNMLGYG…IEELLRDPFL (292 aa). Residues 46–54 and Lys-69 contribute to the ATP site; that span reads LGYGACSTV. Asp-200 (proton acceptor) is an active-site residue.

This sequence belongs to the protein kinase superfamily. Ser/Thr protein kinase family.

The protein resides in the cytoplasm. It localises to the nucleus. The catalysed reaction is L-seryl-[protein] + ATP = O-phospho-L-seryl-[protein] + ADP + H(+). It catalyses the reaction L-threonyl-[protein] + ATP = O-phospho-L-threonyl-[protein] + ADP + H(+). The protein is Serine/threonine-protein kinase ppk34 (ppk34) of Schizosaccharomyces pombe (strain 972 / ATCC 24843) (Fission yeast).